The primary structure comprises 56 residues: Small ribosomal subunit protein uS14 (56 aa).

Zn(2+) is bound by residues cysteine 21, cysteine 24, cysteine 39, and cysteine 42.

The protein belongs to the universal ribosomal protein uS14 family. As to quaternary structure, component of the 40S small ribosomal subunit. Zn(2+) is required as a cofactor.

The protein resides in the cytoplasm. Its subcellular location is the cytosol. It is found in the rough endoplasmic reticulum. This chain is Small ribosomal subunit protein uS14 (RpS29), found in Lonomia obliqua (Moth).